The primary structure comprises 243 residues: Terpene cyclase nodB (243 aa).

Helical transmembrane passes span 19–39, 50–70, and 75–95; these read ISDIFVFGMGVCWLINYAGMI, MAPLALCCNFAWEMVYGLIYP, and IEQGVFLAGLVVNLGVMYTAI. N111 carries an N-linked (GlcNAc...) asparagine glycan. 4 helical membrane-spanning segments follow: residues 112-132, 134-154, 169-189, and 205-225; these read ITLIFALGVLGSLTGHLALAA, IGPALGYSWGAVACQLLLSVG, SYTLWLSRFIGSGCVVGFAIL, and LVLWSLGVFIAVDSLYGICLW.

Belongs to the paxB family.

It is found in the membrane. The protein operates within secondary metabolite biosynthesis. In terms of biological role, terpene cyclase; part of the gene cluster that mediates the biosynthesis of the indole diterpenes nodulisporic acids (NA). Nodulisporic acid A (NAA) and its chemically modified derivatives are of particular significance because of their highly potent insecticidal activity against blood-feeding arthropods and lack of observable adverse effects on mammals, in particular the tremogenicity associated with the paspaline-derived IDTs is not observed. The geranylgeranyl diphosphate (GGPP) synthase ggs1, localized outside of the cluster, is proposed to catalyze the first step in nodulisporic acid biosynthesis via conversion of farnesyl pyrophosphate and isopentyl pyrophosphate into geranylgeranyl pyrophosphate (GGPP). Condensation of indole-3-glycerol phosphate with GGPP by the prenyl transferase nodC then forms 3-geranylgeranylindole (3-GGI). Epoxidation by the FAD-dependent monooxygenase nodM leads to a single-epoxidized-GGI that is substrate of the terpene cyclase nodB for cyclization to yield emindole SB. The terminal methyl carbon, C28, of emindole SB is then oxidized by the cytochrome P450 monooxygenase nodW to produce nodulisporic acid F (NAF), the pentacyclic core of NAA. NAF is converted to nodulisporic acid E (NAE) via prenylation. This step is probably performed by one of the indole diterpene prenyltransferases nodD1 or nodD2. Several oxidation steps performed by the FAD-linked oxidoreductase nodO and one of the cytochrome P450 monooxygenase nodR, nodX or nodZ further convert NAE to nodulisporic acid D (NAD). NAD is substrate of cytochrome P450 monooxygenase nodJ to produce the precursor of nodulisporic acid C (NAC), converted to NAC by one of the indole diterpene prenyltransferases nodD1 or nodD2. The FAD-dependent monooxygenase nodY2 then oxidizes NAC to nodulisporic acid B (NAB). Finally NAB is converted to NAA by one of the cytochrome P450 monooxygenases nodR, nodX or nodZ. The chain is Terpene cyclase nodB from Hypoxylon pulicicidum.